Reading from the N-terminus, the 197-residue chain is Large ribosomal subunit protein uL11 (197 aa).

This sequence belongs to the universal ribosomal protein uL11 family. Part of the ribosomal stalk of the 50S ribosomal subunit. Interacts with L10 and the large rRNA to form the base of the stalk. L10 forms an elongated spine to which L12 dimers bind in a sequential fashion forming a multimeric L10(L12)X complex. In terms of processing, one or more lysine residues are methylated.

Functionally, forms part of the ribosomal stalk which helps the ribosome interact with GTP-bound translation factors. This chain is Large ribosomal subunit protein uL11, found in Mycoplasma mobile (strain ATCC 43663 / 163K / NCTC 11711) (Mesomycoplasma mobile).